Consider the following 483-residue polypeptide: Serine protease HTRA4 (483 aa).

A signal peptide spans methionine 1–alanine 30. In terms of domain architecture, IGFBP N-terminal spans valine 35 to alanine 113. Cystine bridges form between cysteine 39/cysteine 65, cysteine 43/cysteine 67, cysteine 48/cysteine 68, cysteine 54/cysteine 71, cysteine 79/cysteine 93, and cysteine 87/cysteine 110. The interval glycine 208 to leucine 368 is serine protease. Active-site charge relay system residues include histidine 224, aspartate 254, and serine 332. Residues lysine 379–glutamine 471 form the PDZ domain.

The protein belongs to the peptidase S1C family.

It is found in the secreted. Functionally, serine protease. The sequence is that of Serine protease HTRA4 (Htra4) from Mus musculus (Mouse).